We begin with the raw amino-acid sequence, 78 residues long: Ferredoxin 7Fe (78 aa).

4Fe-4S ferredoxin-type domains are found at residues 2 to 29 (AYVITEPCIGTKDASCVEVCPVDCIHEG) and 31 to 60 (DQYYIDPDVCIDCGACEAVCPVSAIYHEDF). Cys9 and Cys17 together coordinate [3Fe-4S] cluster. 4 residues coordinate [4Fe-4S] cluster: Cys21, Cys40, Cys43, and Cys46. Cys50 contacts [3Fe-4S] cluster.

In terms of assembly, monomer. Requires [4Fe-4S] cluster as cofactor. It depends on [3Fe-4S] cluster as a cofactor.

The polypeptide is Ferredoxin 7Fe (fdxA) (Hydrogenibacillus schlegelii (Bacillus schlegelii)).